Consider the following 83-residue polypeptide: RNA-binding protein Hfq (83 aa).

One can recognise a Sm domain in the interval 11 to 71 (DTFLNFVRKN…ISTIMPGQPI (61 aa)).

Belongs to the Hfq family. In terms of assembly, homohexamer.

RNA chaperone that binds small regulatory RNA (sRNAs) and mRNAs to facilitate mRNA translational regulation in response to envelope stress, environmental stress and changes in metabolite concentrations. Also binds with high specificity to tRNAs. In Methylocella silvestris (strain DSM 15510 / CIP 108128 / LMG 27833 / NCIMB 13906 / BL2), this protein is RNA-binding protein Hfq.